Reading from the N-terminus, the 172-residue chain is Major exported protein (172 aa).

This sequence belongs to the hcp1 family.

It localises to the secreted. This is Major exported protein (hcpA) from Pseudomonas aeruginosa (strain ATCC 15692 / DSM 22644 / CIP 104116 / JCM 14847 / LMG 12228 / 1C / PRS 101 / PAO1).